The sequence spans 251 residues: uncharacterized protein (251 aa).

An HTH deoR-type domain is found at 3-58 (TPERHQLIIDQIEKHDVVKIQELINLTNASESTIRRDLSTLEERGFLKRVHGGAAK). A DNA-binding region (H-T-H motif) is located at residues 20-39 (VKIQELINLTNASESTIRRD).

This is an uncharacterized protein from Bacillus subtilis (strain 168).